A 150-amino-acid chain; its full sequence is Large ribosomal subunit protein uL11 (150 aa).

This sequence belongs to the universal ribosomal protein uL11 family. As to quaternary structure, part of the ribosomal stalk of the 50S ribosomal subunit. Interacts with L10 and the large rRNA to form the base of the stalk. L10 forms an elongated spine to which L12 dimers bind in a sequential fashion forming a multimeric L10(L12)X complex. One or more lysine residues are methylated.

Forms part of the ribosomal stalk which helps the ribosome interact with GTP-bound translation factors. The chain is Large ribosomal subunit protein uL11 from Cereibacter sphaeroides (strain ATCC 17025 / ATH 2.4.3) (Rhodobacter sphaeroides).